Consider the following 1699-residue polypeptide: Hybrid signal transduction histidine kinase E (1699 aa).

2 disordered regions span residues 1–32 (MDKL…NLEN) and 58–97 (NNII…NPNV). The segment covering 7–32 (NNNLSPPSSPSSSTTTPNLSSTNLEN) has biased composition (low complexity). 6 consecutive transmembrane segments (helical) span residues 142 to 162 (CILL…LIFL), 164 to 184 (SFYP…IVST), 191 to 211 (LVAL…FLQI), 238 to 258 (LNFL…IFFP), 262 to 282 (FSIT…LISI), and 295 to 315 (NLIV…ILSI). Positions 412-432 (ITNGGNNKQTSTTSANSTPRY) are enriched in polar residues. 2 disordered regions span residues 412–439 (ITNG…NNNN) and 542–593 (LLNN…NISN). Residues 544 to 593 (NNNNNNNNNNNNNNNNNNNNNNNNNNSNNNNNNNSNNNNNNNNINNNISN) are compositionally biased toward low complexity. In terms of domain architecture, Histidine kinase spans 678–950 (TVSHEVRTPI…AFSFTSILST (273 aa)). His-681 carries the phosphohistidine; by autocatalysis modification. Disordered stretches follow at residues 819–866 (NNNN…NNNN), 1018–1054 (NNNN…NDNN), 1186–1239 (KKQQ…RKSS), 1252–1294 (MVQV…NPNN), and 1351–1406 (SIPI…SPPP). Over residues 1198–1212 (MGDTLSSTKSPQYTN) the composition is skewed to polar residues. The segment covering 1219 to 1239 (SSSSNGSLNKSNRSNLLRKSS) has biased composition (low complexity). The segment covering 1271 to 1282 (KGNNSNPNSTEL) has biased composition (polar residues). Low complexity-rich tracts occupy residues 1283-1294 (NSTNSVNGNPNN) and 1355-1392 (NINN…NNNN). Residues 1575–1695 (NALIVDDTEL…TLKDTLLKWG (121 aa)) form the Response regulatory domain. Asp-1625 is subject to 4-aspartylphosphate.

It localises to the membrane. It catalyses the reaction ATP + protein L-histidine = ADP + protein N-phospho-L-histidine.. May act in a signal transduction pathway. This protein undergoes an ATP-dependent autophosphorylation at a conserved histidine residue in the kinase core, and a phosphoryl group is then transferred to a conserved aspartate residue in the receiver domain. This chain is Hybrid signal transduction histidine kinase E (dhkE), found in Dictyostelium discoideum (Social amoeba).